The chain runs to 332 residues: Beta-ketoacyl-[acyl-carrier-protein] synthase III 2 (332 aa).

Catalysis depends on residues C115 and H252. The segment at 253-257 (SANLR) is ACP-binding. The active site involves N282.

The protein belongs to the thiolase-like superfamily. FabH family. Homodimer.

It localises to the cytoplasm. It carries out the reaction malonyl-[ACP] + acetyl-CoA + H(+) = 3-oxobutanoyl-[ACP] + CO2 + CoA. The protein operates within lipid metabolism; fatty acid biosynthesis. Its function is as follows. Catalyzes the condensation reaction of fatty acid synthesis by the addition to an acyl acceptor of two carbons from malonyl-ACP. Catalyzes the first condensation reaction which initiates fatty acid synthesis and may therefore play a role in governing the total rate of fatty acid production. Possesses both acetoacetyl-ACP synthase and acetyl transacylase activities. Its substrate specificity determines the biosynthesis of branched-chain and/or straight-chain of fatty acids. This is Beta-ketoacyl-[acyl-carrier-protein] synthase III 2 from Halalkalibacterium halodurans (strain ATCC BAA-125 / DSM 18197 / FERM 7344 / JCM 9153 / C-125) (Bacillus halodurans).